A 216-amino-acid polypeptide reads, in one-letter code: Ras-related protein YPTC6 (216 aa).

19-26 (GDSGVGKS) is a binding site for GTP. The short motif at 41 to 49 (SKSTIGVEF) is the Effector region element. GTP is bound by residues 67-71 (DTAGQ) and 125-128 (NKSD). Residues cysteine 214 and cysteine 215 are each lipidated (S-geranylgeranyl cysteine).

It belongs to the small GTPase superfamily. Rab family.

The protein resides in the cell membrane. This Chlamydomonas reinhardtii (Chlamydomonas smithii) protein is Ras-related protein YPTC6 (YPTC6).